The chain runs to 120 residues: Ribonuclease P protein component (120 aa).

Belongs to the RnpA family. As to quaternary structure, consists of a catalytic RNA component (M1 or rnpB) and a protein subunit.

It carries out the reaction Endonucleolytic cleavage of RNA, removing 5'-extranucleotides from tRNA precursor.. In terms of biological role, RNaseP catalyzes the removal of the 5'-leader sequence from pre-tRNA to produce the mature 5'-terminus. It can also cleave other RNA substrates such as 4.5S RNA. The protein component plays an auxiliary but essential role in vivo by binding to the 5'-leader sequence and broadening the substrate specificity of the ribozyme. The polypeptide is Ribonuclease P protein component (Chlamydia trachomatis serovar A (strain ATCC VR-571B / DSM 19440 / HAR-13)).